Here is a 189-residue protein sequence, read N- to C-terminus: Thermostable direct hemolysin 1 (189 aa).

Residues M1–A24 form the signal peptide. C175 and C185 form a disulfide bridge.

This sequence belongs to the TDH hemolysin family. As to quaternary structure, homodimer.

Its function is as follows. Bacterial hemolysins are exotoxins that attack blood cell membranes and cause cell rupture by mechanisms not clearly defined. This Vibrio parahaemolyticus serotype O3:K6 (strain RIMD 2210633) protein is Thermostable direct hemolysin 1 (tdh1).